The primary structure comprises 349 residues: tRNA pseudouridine synthase D (349 aa).

A substrate-binding site is contributed by Phe27. Asp80 serves as the catalytic Nucleophile. A substrate-binding site is contributed by Asn129. The region spanning 155 to 303 (GVPNYFGAQR…VEAARRAMLL (149 aa)) is the TRUD domain. Phe329 serves as a coordination point for substrate.

The protein belongs to the pseudouridine synthase TruD family.

It catalyses the reaction uridine(13) in tRNA = pseudouridine(13) in tRNA. Responsible for synthesis of pseudouridine from uracil-13 in transfer RNAs. This is tRNA pseudouridine synthase D from Escherichia coli O17:K52:H18 (strain UMN026 / ExPEC).